A 237-amino-acid polypeptide reads, in one-letter code: Uridylate kinase (237 aa).

An ATP-binding site is contributed by 12–15 (KLSG). The segment at 20–25 (GENGFG) is involved in allosteric activation by GTP. UMP is bound at residue G54. ATP contacts are provided by G55 and R59. Residues D72 and 133–140 (TGNPYFST) contribute to the UMP site. ATP contacts are provided by Y166 and D169.

Belongs to the UMP kinase family. In terms of assembly, homohexamer.

Its subcellular location is the cytoplasm. It carries out the reaction UMP + ATP = UDP + ADP. It participates in pyrimidine metabolism; CTP biosynthesis via de novo pathway; UDP from UMP (UMPK route): step 1/1. Its activity is regulated as follows. Allosterically activated by GTP. Inhibited by UTP. Functionally, catalyzes the reversible phosphorylation of UMP to UDP. This chain is Uridylate kinase, found in Clostridium perfringens (strain ATCC 13124 / DSM 756 / JCM 1290 / NCIMB 6125 / NCTC 8237 / Type A).